The sequence spans 104 residues: Seminal ribonuclease (104 aa).

4 disulfide bridges follow: Cys12-Cys70, Cys26-Cys81, Cys44-Cys96, and Cys51-Cys58. Residues 27-31 (KPVNT), Lys52, and Arg71 contribute to the substrate site.

This sequence belongs to the pancreatic ribonuclease family. In terms of assembly, homodimer; disulfide-linked.

The protein localises to the secreted. The catalysed reaction is an [RNA] containing cytidine + H2O = an [RNA]-3'-cytidine-3'-phosphate + a 5'-hydroxy-ribonucleotide-3'-[RNA].. The enzyme catalyses an [RNA] containing uridine + H2O = an [RNA]-3'-uridine-3'-phosphate + a 5'-hydroxy-ribonucleotide-3'-[RNA].. This Saiga tatarica (Saiga antelope) protein is Seminal ribonuclease (SRN).